A 296-amino-acid chain; its full sequence is MKAYFIAILTLFTCIATVVRAQQMSELENRIDSLLNGKKATVGIAVWTDKGDMLRYNDHVHFPLLSVFKFHVALAVLDKMDKQSISLDSIVSIKASQMPPNTYSPLRKKFPDQDFTITLRELMQYSISQSDNNACDILIEYAGGIKHINDYIHRLSIDSFNLSETEDGMHSSFEAVYRNWSTPSAMVRLLRTADEKELFSNKELKDFLWQTMIDTETGANKLKGMLPAKTVVGHKTGSSDRNADGMKTADNDAGLVILPDGRKYYIAAFVMDSYETDEDNANIIARISRMVYDAMR.

The signal sequence occupies residues 1–21 (MKAYFIAILTLFTCIATVVRA). Serine 66 acts as the Acyl-ester intermediate in catalysis. Residue 235 to 237 (KTG) participates in substrate binding.

This sequence belongs to the class-A beta-lactamase family.

It carries out the reaction a beta-lactam + H2O = a substituted beta-amino acid. This chain is Beta-lactamase (cblA), found in Bacteroides uniformis.